A 364-amino-acid chain; its full sequence is Aminomethyltransferase (364 aa).

This sequence belongs to the GcvT family. The glycine cleavage system is composed of four proteins: P, T, L and H.

The enzyme catalyses N(6)-[(R)-S(8)-aminomethyldihydrolipoyl]-L-lysyl-[protein] + (6S)-5,6,7,8-tetrahydrofolate = N(6)-[(R)-dihydrolipoyl]-L-lysyl-[protein] + (6R)-5,10-methylene-5,6,7,8-tetrahydrofolate + NH4(+). In terms of biological role, the glycine cleavage system catalyzes the degradation of glycine. This is Aminomethyltransferase from Shewanella sp. (strain MR-4).